We begin with the raw amino-acid sequence, 202 residues long: Small ribosomal subunit protein uS4c (202 aa).

The S4 RNA-binding domain occupies 90–154 (MRLDNIIFRL…SQSIIIKNLN (65 aa)).

This sequence belongs to the universal ribosomal protein uS4 family. Part of the 30S ribosomal subunit. Contacts protein S5. The interaction surface between S4 and S5 is involved in control of translational fidelity.

The protein localises to the plastid. It localises to the chloroplast. One of the primary rRNA binding proteins, it binds directly to 16S rRNA where it nucleates assembly of the body of the 30S subunit. In terms of biological role, with S5 and S12 plays an important role in translational accuracy. The sequence is that of Small ribosomal subunit protein uS4c (rps4) from Marchantia polymorpha (Common liverwort).